Consider the following 184-residue polypeptide: ADP-ribosylation factor-like protein 3 (184 aa).

Gly2 carries N-myristoyl glycine lipidation. GTP contacts are provided by residues 24–31 (GLDNAGKT), 68–72 (DIGGQ), and 127–130 (NKQD).

It belongs to the small GTPase superfamily. Arf family.

It is found in the golgi apparatus. GTP-binding protein that may be involved in protein trafficking; may modulate vesicle budding and uncoating within the Golgi apparatus. The sequence is that of ADP-ribosylation factor-like protein 3 (arl-3) from Caenorhabditis elegans.